The sequence spans 37 residues: Large ribosomal subunit protein bL36 (37 aa).

It belongs to the bacterial ribosomal protein bL36 family.

This is Large ribosomal subunit protein bL36 from Geobacter sp. (strain M21).